Here is a 106-residue protein sequence, read N- to C-terminus: UPF0145 protein CLH_2273 (106 aa).

It belongs to the UPF0145 family.

This chain is UPF0145 protein CLH_2273, found in Clostridium botulinum (strain Alaska E43 / Type E3).